The following is a 162-amino-acid chain: Phosphopantetheine adenylyltransferase (162 aa).

Ser-11 lines the substrate pocket. ATP contacts are provided by residues 11 to 12 (SF) and His-19. Positions 43, 76, and 90 each coordinate substrate. Residues 91–93 (GLR), Glu-101, and 126–132 (HLYISSS) each bind ATP.

The protein belongs to the bacterial CoaD family. As to quaternary structure, homohexamer. Mg(2+) is required as a cofactor.

The protein localises to the cytoplasm. The enzyme catalyses (R)-4'-phosphopantetheine + ATP + H(+) = 3'-dephospho-CoA + diphosphate. The protein operates within cofactor biosynthesis; coenzyme A biosynthesis; CoA from (R)-pantothenate: step 4/5. Reversibly transfers an adenylyl group from ATP to 4'-phosphopantetheine, yielding dephospho-CoA (dPCoA) and pyrophosphate. This is Phosphopantetheine adenylyltransferase from Streptococcus pneumoniae (strain 70585).